The sequence spans 411 residues: MTNKTWGGRFKKSLDSGVNQFNASLSFDHVLFDQDINGSQVHVKQLAKQKILTEAECQGIYSALEEIRTEIKQGQYSFNERDEEDIHMFIEQLLIQKIGDLGKKLHTGRSRNDQVALDLRLYTRDKGCLINELLTRLIVCLDDLTSKHQQDLMPGYTHLQQAQPVALGAYFNAYQCMFSRDKSRLEDWFKRMNYSPLGAGALAGSTLPLDREWVAESLGFAGIIPNTLDAVSDRDFVIELCSVAAMIMMHLSRLCEDLILWSTQEFNFVTLDDAFATGSSLMPNKKNPDVPELIRGKSGRVYGHLMAILTVMKGLPLAYNKDMQEDKEGLFDTINTIIVCLQMITPFLQSLTFNTPLMRTKAQSGYLDATAILESLVMKGMPFRDAHHQVGAWIAEAIEKQCSLNELLKGG.

Belongs to the lyase 1 family. Argininosuccinate lyase subfamily.

It localises to the cytoplasm. It carries out the reaction 2-(N(omega)-L-arginino)succinate = fumarate + L-arginine. The protein operates within amino-acid biosynthesis; L-arginine biosynthesis; L-arginine from L-ornithine and carbamoyl phosphate: step 3/3. This is Argininosuccinate lyase from Legionella pneumophila (strain Lens).